Reading from the N-terminus, the 498-residue chain is MSILLYFIALLSLIIIKKIKDSNRNLPPSPLKLPVIGNLYQLRGLFHKCLHDLSKKHGPVLLLRLGFLDMVVISSTEAAEEALKVHDLECCTRPITNVTSKLWRDGQDIGLAPYGESLRELRKLSFLKFFSTTKVRSFRYIREEENDLMVKKLKEAALKKSSVDLSQTLFGLVGSIIFRSAFGQRFDEGNHVNAEKIEDLMFEVQKLGALSNSDLFPGGLGWFVDFVSGHNKKLHKVFVEVDTLLNHIIDDHLKNSIEEITHDRPDIIDSLLDMIRKQEQGDSFKLTIDNLKGIIQDIYLAGVDTSAITMIWAMAELVKNPRVMKKVQDEIRTCIGIKQNEKIEEDDVDKLQYLKLVVKETLRLHPAAPLLLPRETMSQIKIQGYNIPSKTILLVNVWSIGRDPKHWKNPEEFNPERFIDCPIDYKGNSFEMLPFGSGRRICPGIAFAIATVELGLLNLLYHFDWRLPEEDKDLDMEEAGDVTIIKKVPLKLVPVLHH.

Residues 1–21 (MSILLYFIALLSLIIIKKIKD) traverse the membrane as a helical segment. Position 442 (Cys442) interacts with heme.

The protein belongs to the cytochrome P450 family. Requires heme as cofactor.

The protein resides in the membrane. This is Cytochrome P450 71B24 (CYP71B24) from Arabidopsis thaliana (Mouse-ear cress).